Consider the following 431-residue polypeptide: Extensin-3 (431 aa).

A signal peptide spans 1–27 (MGSPMASLVATLLVLTISLTFVSQSTA). 3 repeat units span residues 33-41 (SPPPPVKHY), 49-55 (SPPPVYH), and 56-63 (SPPPPKKH). Residues 33–384 (SPPPPVKHYT…KSPPPPVKHY (352 aa)) are 13 X 9 AA repeats of S-P-P-P-P-V-K-H-Y. The interval 42 to 408 (TPPVKHYSPP…KYVYKSPPPP (367 aa)) is disordered. A compositionally biased stretch (pro residues) spans 49 to 59 (SPPPVYHSPPP). A 13 X 7 AA repeats of S-P-P-P-V-Y-H region spans residues 49–391 (SPPPVYHSPP…KHYSPPPVYH (343 aa)). Positions 56–371 (SPPPPKKHYE…YHSPPPPKKH (316 aa)) are 12 X 8 AA repeats of S-P-P-P-P-K-K-H. The segment at 64–67 (YEYK) is isodityrosine cross-linking. Tandem repeats lie at residues 68 to 76 (SPPPPVKHY), 77 to 83 (SPPPVYH), and 84 to 91 (SPPPPKKH). Residues 68-87 (SPPPPVKHYSPPPVYHSPPP) show a composition bias toward pro residues. The interval 92–95 (YVYK) is isodityrosine cross-linking. 3 consecutive repeat copies span residues 96–104 (SPPPPVKHY), 105–111 (SPPPVYH), and 112–119 (SPPPPKKH). The segment covering 96–115 (SPPPPVKHYSPPPVYHSPPP) has biased composition (pro residues). The interval 120-123 (YVYK) is isodityrosine cross-linking. A run of 3 repeats spans residues 124 to 132 (SPPPPVKHY), 133 to 139 (SPPPVYH), and 140 to 147 (SPPPPKKH). Positions 124–143 (SPPPPVKHYSPPPVYHSPPP) are enriched in pro residues. An isodityrosine cross-linking region spans residues 148–151 (YVYK). Tandem repeats lie at residues 152 to 160 (SPPPPVKHY), 161 to 167 (SPPPVYH), and 168 to 175 (SPPPPKKH). A compositionally biased stretch (pro residues) spans 152 to 171 (SPPPPVKHYSPPPVYHSPPP). An isodityrosine cross-linking region spans residues 176 to 179 (YVYK). 3 tandem repeats follow at residues 180–188 (SPPPPVKHY), 189–195 (SPPPVYH), and 196–203 (SPPPPKKH). The segment covering 180–199 (SPPPPVKHYSPPPVYHSPPP) has biased composition (pro residues). The segment at 204–207 (YVYK) is isodityrosine cross-linking. 3 repeat units span residues 208-216 (SPPPPVKHY), 217-223 (SPPPVYH), and 224-231 (SPPPPKKH). Over residues 208-227 (SPPPPVKHYSPPPVYHSPPP) the composition is skewed to pro residues. The isodityrosine cross-linking stretch occupies residues 232–235 (YVYK). Repeat copies occupy residues 236 to 244 (SPPPPVKHY), 245 to 251 (SPPPVYH), and 252 to 259 (SPPPPKKH). Over residues 236–255 (SPPPPVKHYSPPPVYHSPPP) the composition is skewed to pro residues. The tract at residues 260 to 263 (YVYK) is isodityrosine cross-linking. 3 consecutive repeat copies span residues 264-272 (SPPPPVKHY), 273-279 (SPPPVYH), and 280-287 (SPPPPKKH). Pro residues predominate over residues 264–283 (SPPPPVKHYSPPPVYHSPPP). Residues 288–291 (YVYK) form an isodityrosine cross-linking region. A run of 3 repeats spans residues 292–300 (SPPPPVKHY), 301–307 (SPPPVYH), and 308–315 (SPPPPKKH). Over residues 292–311 (SPPPPVKHYSPPPVYHSPPP) the composition is skewed to pro residues. The tract at residues 316–319 (YVYK) is isodityrosine cross-linking. Repeat copies occupy residues 320–328 (SPPPPVKHY), 329–335 (SPPPVYH), and 336–343 (SPPPPKKH). A compositionally biased stretch (pro residues) spans 320–339 (SPPPPVKHYSPPPVYHSPPP). The tract at residues 344-347 (YVYK) is isodityrosine cross-linking. A run of 3 repeats spans residues 348–356 (SPPPPVKHY), 357–363 (SPPPVYH), and 364–371 (SPPPPKKH). The span at 348–367 (SPPPPVKHYSPPPVYHSPPP) shows a compositional bias: pro residues. The isodityrosine cross-linking stretch occupies residues 372–375 (YVYK). 2 tandem repeats follow at residues 376-384 (SPPPPVKHY) and 385-391 (SPPPVYH). Positions 376–395 (SPPPPVKHYSPPPVYHSPPP) are enriched in pro residues. 2 isodityrosine cross-linking regions span residues 400-403 (YVYK) and 420-423 (YLYK).

Belongs to the extensin family. In terms of processing, the proline residues of the Ser-Pro(3) repeats are hydroxylated and then O-glycosylated (arabinosylation) by HPAT1, HPAT2 and HPAT3. Around 20% of Hyp units are in the nonglycosylated form. The Ser residues are O-galactosylated. The lack of Ser-O-galactosylation does not affect Hyp-O-arabinosylation, but both types of O-glycosylation are central for the functionality of the protein. Correct Hyp-O-arabinosylation appears to be responsible for generating a bend on the EXT3 backbone around a YVY motif, which may represent a better scenario for Tyr intramolecular cross-links (isodityrosine type). Post-translationally, synthetised as soluble proteins which become insolubilised in the cell wall through the intermolecular cross-linking of Tyr on adjacent monomers. Isodityrosine (IDT) stabilizes and makes rigid the part of the polypeptide where IDT functional sites are present. In terms of tissue distribution, predominantly expressed in the roots.

It localises to the secreted. The protein localises to the primary cell wall. Functionally, structural component which strengthens the primary cell wall. Forms dendritic structures indicating a propensity for self-assembly through tyrosine cross-linking. Forms intermolecular cross-links exclusively by pulcherosine (three Tyr). Scaffold formation requires an unobstructed C-terminus of EXT3. Required for the correct positioning of the cell plate during cytokinesis in cells of the developing embryo. Extensins contain a characteristic repeat of the pentapeptide Ser-Pro(4). For this particular extensin, a typical repeat of Ser-Pro(3) is found. The protein is Extensin-3 of Arabidopsis thaliana (Mouse-ear cress).